Here is a 494-residue protein sequence, read N- to C-terminus: Ketol-acid reductoisomerase (NADP(+)) (494 aa).

A KARI N-terminal Rossmann domain is found at 14-208; it reads LDQLGRCRFM…GGHRAGCLES (195 aa). NADP(+) is bound by residues 45 to 48, Arg-68, Arg-76, Ser-78, and 108 to 110; these read CGAQ and DKQ. Residue His-132 is part of the active site. Residue Gly-158 participates in NADP(+) binding. 2 KARI C-terminal knotted domains span residues 209-344 and 345-487; these read SFVA…NYPS and TDVE…MTDM. Residues Asp-217, Glu-221, Glu-389, and Glu-393 each contribute to the Mg(2+) site. A substrate-binding site is contributed by Ser-414.

This sequence belongs to the ketol-acid reductoisomerase family. Mg(2+) is required as a cofactor.

It catalyses the reaction (2R)-2,3-dihydroxy-3-methylbutanoate + NADP(+) = (2S)-2-acetolactate + NADPH + H(+). The catalysed reaction is (2R,3R)-2,3-dihydroxy-3-methylpentanoate + NADP(+) = (S)-2-ethyl-2-hydroxy-3-oxobutanoate + NADPH + H(+). It functions in the pathway amino-acid biosynthesis; L-isoleucine biosynthesis; L-isoleucine from 2-oxobutanoate: step 2/4. The protein operates within amino-acid biosynthesis; L-valine biosynthesis; L-valine from pyruvate: step 2/4. Its function is as follows. Involved in the biosynthesis of branched-chain amino acids (BCAA). Catalyzes an alkyl-migration followed by a ketol-acid reduction of (S)-2-acetolactate (S2AL) to yield (R)-2,3-dihydroxy-isovalerate. In the isomerase reaction, S2AL is rearranged via a Mg-dependent methyl migration to produce 3-hydroxy-3-methyl-2-ketobutyrate (HMKB). In the reductase reaction, this 2-ketoacid undergoes a metal-dependent reduction by NADPH to yield (R)-2,3-dihydroxy-isovalerate. The protein is Ketol-acid reductoisomerase (NADP(+)) of Vibrio vulnificus (strain CMCP6).